Reading from the N-terminus, the 407-residue chain is Multifunctional CCA protein (407 aa).

ATP contacts are provided by Gly-8 and Arg-11. Gly-8 and Arg-11 together coordinate CTP. Mg(2+) contacts are provided by Asp-21 and Asp-23. ATP is bound by residues Arg-91, Arg-137, and Arg-140. 3 residues coordinate CTP: Arg-91, Arg-137, and Arg-140. The HD domain maps to 228-329 (TGVHALMALA…VALFDRVDAW (102 aa)).

Belongs to the tRNA nucleotidyltransferase/poly(A) polymerase family. Bacterial CCA-adding enzyme type 1 subfamily. Monomer. Can also form homodimers and oligomers. Mg(2+) serves as cofactor. Ni(2+) is required as a cofactor.

It catalyses the reaction a tRNA precursor + 2 CTP + ATP = a tRNA with a 3' CCA end + 3 diphosphate. It carries out the reaction a tRNA with a 3' CCA end + 2 CTP + ATP = a tRNA with a 3' CCACCA end + 3 diphosphate. In terms of biological role, catalyzes the addition and repair of the essential 3'-terminal CCA sequence in tRNAs without using a nucleic acid template. Adds these three nucleotides in the order of C, C, and A to the tRNA nucleotide-73, using CTP and ATP as substrates and producing inorganic pyrophosphate. tRNA 3'-terminal CCA addition is required both for tRNA processing and repair. Also involved in tRNA surveillance by mediating tandem CCA addition to generate a CCACCA at the 3' terminus of unstable tRNAs. While stable tRNAs receive only 3'-terminal CCA, unstable tRNAs are marked with CCACCA and rapidly degraded. In Erwinia tasmaniensis (strain DSM 17950 / CFBP 7177 / CIP 109463 / NCPPB 4357 / Et1/99), this protein is Multifunctional CCA protein.